A 166-amino-acid polypeptide reads, in one-letter code: Coiled-coil domain-containing protein 12 (166 aa).

Position 1 is an N-acetylmethionine (Met1). Positions 8 to 28 (VGRLEEEALRRKERLKALREK) form a coiled coil. Residues 21–53 (RLKALREKTGRKDREDGEPQTKQLREEGEEVGK) are compositionally biased toward basic and acidic residues. Positions 21–55 (RLKALREKTGRKDREDGEPQTKQLREEGEEVGKHR) are disordered. N6-acetyllysine is present on Lys53. A Glycyl lysine isopeptide (Lys-Gly) (interchain with G-Cter in SUMO2) cross-link involves residue Lys94. Positions 115-144 (DLKRDVAKKLEKLEKRTQRAIAELIRERLK) form a coiled coil. The segment at 146 to 166 (QEDSLASAVDATTGQEACDSD) is disordered. 2 positions are modified to phosphoserine: Ser149 and Ser165.

The sequence is that of Coiled-coil domain-containing protein 12 (Ccdc12) from Mus musculus (Mouse).